The primary structure comprises 393 residues: NADH-quinone oxidoreductase subunit D 2 (393 aa).

Belongs to the complex I 49 kDa subunit family. NDH-1 is composed of 14 different subunits. Subunits NuoB, C, D, E, F, and G constitute the peripheral sector of the complex.

Its subcellular location is the cell inner membrane. The catalysed reaction is a quinone + NADH + 5 H(+)(in) = a quinol + NAD(+) + 4 H(+)(out). Functionally, NDH-1 shuttles electrons from NADH, via FMN and iron-sulfur (Fe-S) centers, to quinones in the respiratory chain. The immediate electron acceptor for the enzyme in this species is believed to be a menaquinone. Couples the redox reaction to proton translocation (for every two electrons transferred, four hydrogen ions are translocated across the cytoplasmic membrane), and thus conserves the redox energy in a proton gradient. This Cytophaga hutchinsonii (strain ATCC 33406 / DSM 1761 / CIP 103989 / NBRC 15051 / NCIMB 9469 / D465) protein is NADH-quinone oxidoreductase subunit D 2.